The following is a 225-amino-acid chain: DNA-binding response regulator MtrA (225 aa).

Residues 4–117 (RILVVDDDAS…ELVARVRARL (114 aa)) form the Response regulatory domain. 4-aspartylphosphate is present on Asp53. The segment at residues 125–224 (AEMLSIADVE…VRGVGYKAGP (100 aa)) is a DNA-binding region (ompR/PhoB-type).

Post-translationally, phosphorylated by MtrB.

In terms of biological role, member of the two-component regulatory system MtrA/MtrB. The chain is DNA-binding response regulator MtrA (mtrA) from Mycolicibacterium paratuberculosis (strain ATCC BAA-968 / K-10) (Mycobacterium paratuberculosis).